Here is a 341-residue protein sequence, read N- to C-terminus: HTH-type transcriptional repressor PurR (341 aa).

The HTH lacI-type domain maps to 2–56 (ATIKDVAKRAGVSTTTVSHVINKTRFVADETREAVWVAIKELHYSPSAVARSLKV). Positions 4-23 (IKDVAKRAGVSTTTVSHVIN) form a DNA-binding region, H-T-H motif. Residues 48-56 (SAVARSLKV) mediate DNA binding. The hypoxanthine site is built by Tyr73, Arg190, Thr192, Phe221, and Asp275.

Homodimer.

It functions in the pathway purine metabolism; purine nucleotide biosynthesis [regulation]. In terms of biological role, is the main repressor of the genes involved in the de novo synthesis of purine nucleotides, regulating purB, purC, purEK, purF, purHD, purL, purMN and guaBA expression. PurR is allosterically activated to bind its cognate DNA by binding the purine corepressors, hypoxanthine or guanine, thereby effecting transcription repression. This chain is HTH-type transcriptional repressor PurR, found in Erwinia tasmaniensis (strain DSM 17950 / CFBP 7177 / CIP 109463 / NCPPB 4357 / Et1/99).